A 339-amino-acid chain; its full sequence is Methylthioribose-1-phosphate isomerase (339 aa).

Residues Arg49–Ala51, Arg86, and Gln187 each bind substrate. The Proton donor role is filled by Asp228. Asn238–Lys239 contacts substrate.

Belongs to the eIF-2B alpha/beta/delta subunits family. MtnA subfamily.

The catalysed reaction is 5-(methylsulfanyl)-alpha-D-ribose 1-phosphate = 5-(methylsulfanyl)-D-ribulose 1-phosphate. The protein operates within amino-acid biosynthesis; L-methionine biosynthesis via salvage pathway; L-methionine from S-methyl-5-thio-alpha-D-ribose 1-phosphate: step 1/6. Functionally, catalyzes the interconversion of methylthioribose-1-phosphate (MTR-1-P) into methylthioribulose-1-phosphate (MTRu-1-P). The chain is Methylthioribose-1-phosphate isomerase from Cronobacter sakazakii (strain ATCC BAA-894) (Enterobacter sakazakii).